A 453-amino-acid chain; its full sequence is MVEIHLKNSKSRKVELLQPIEPGRVSLYLCGPTVYDRAHLGNARSAVVFDQLFRLLRHVYGAENVTFVRNFTDVDDKINARALAEGREIADLTAETSQWYLDDTRALGVLDPNHMPRATEYIAEMVAFIEDLIAKGFAYARDGHALFRVRSFDDYGKLSGRSVDDMIAGARVEVAPYKEDPMDFVLWKPSSDDIPGWDSPWGRGRPGWHIECSAMAHALLGEQFDIHGGGADLMFPHHENEVAQSCAAGHGFANIWMHNEMLQVEGKKMSKSLGNFFTVRDLLDQGVPGEVIRFVMLSTHYGKPMDWTEKKRAEAEATLRKWYAALRQSVAEQEATPHLVDSLADDLNTALAITTLHGMYETGNFGPLAGGLRLLGLWSGTVPDWSEIAEVDLTYFAGRFSSARAEAMVTKDFTDVDALKSALTAAGVEVRMSKDGVELVPGPTFDPAKLEDL.

Cys-30 contributes to the Zn(2+) binding site. The short motif at 32-42 (PTVYDRAHLGN) is the 'HIGH' region element. Zn(2+) is bound by residues Cys-212, His-237, and Glu-241. The short motif at 268–272 (KMSKS) is the 'KMSKS' region element. Lys-271 lines the ATP pocket.

This sequence belongs to the class-I aminoacyl-tRNA synthetase family. Monomer. Zn(2+) is required as a cofactor.

Its subcellular location is the cytoplasm. It carries out the reaction tRNA(Cys) + L-cysteine + ATP = L-cysteinyl-tRNA(Cys) + AMP + diphosphate. The protein is Cysteine--tRNA ligase of Jannaschia sp. (strain CCS1).